Consider the following 166-residue polypeptide: Eukaryotic translation initiation factor 5A (166 aa).

Lys-52 is modified (hypusine). Residues 99–125 (DREDPSKPAHLSLMDDEGETRDNLDMP) form a disordered region.

This sequence belongs to the eIF-5A family. Post-translationally, lys-52 undergoes hypusination, a unique post-translational modification that consists in the addition of a butylamino group from spermidine to lysine side chain, leading to the formation of the unusual amino acid hypusine. eIF-5As are the only known proteins to undergo this modification, which is essential for their function. Hypusination is mediated by the consecutive action of deoxyhypusine synthase DHSc and deoxyhypusine hydroxylase DOHH.

The protein resides in the cytoplasm. Functionally, translation factor that promotes translation elongation and termination, particularly upon ribosome stalling at specific amino acid sequence contexts. Binds between the exit (E) and peptidyl (P) site of the ribosome and promotes rescue of stalled ribosome: specifically required for efficient translation of polyproline-containing peptides as well as other motifs that stall the ribosome. Acts as a ribosome quality control (RQC) cofactor by joining the RQC complex to facilitate peptidyl transfer during CAT tailing step. Required for cell growth during both bloodstream (BF) and insect procyclic (PF) life cycle stages and for survival of the bloodstream form. The sequence is that of Eukaryotic translation initiation factor 5A from Trypanosoma brucei brucei (strain 927/4 GUTat10.1).